The sequence spans 516 residues: Probable serine/threonine-protein kinase ECU02_0550 (516 aa).

The region spanning 4 to 230 is the Protein kinase domain; that stretch reads YKLRQVIGEG…ASEALMHRSF (227 aa). Residues 10 to 18 and Lys-32 contribute to the ATP site; that span reads IGEGASSTV. The active-site Proton acceptor is Asp-120.

The protein belongs to the protein kinase superfamily. CAMK Ser/Thr protein kinase family.

The enzyme catalyses L-seryl-[protein] + ATP = O-phospho-L-seryl-[protein] + ADP + H(+). The catalysed reaction is L-threonyl-[protein] + ATP = O-phospho-L-threonyl-[protein] + ADP + H(+). The protein is Probable serine/threonine-protein kinase ECU02_0550 of Encephalitozoon cuniculi (strain GB-M1) (Microsporidian parasite).